A 256-amino-acid chain; its full sequence is Probable ribosomal RNA small subunit methyltransferase A (256 aa).

Positions 8, 10, 34, 55, 83, and 98 each coordinate S-adenosyl-L-methionine.

Belongs to the class I-like SAM-binding methyltransferase superfamily. rRNA adenine N(6)-methyltransferase family. RsmA subfamily.

The protein resides in the cytoplasm. Specifically dimethylates two adjacent adenosines in the loop of a conserved hairpin near the 3'-end of 16S rRNA in the 30S particle. May play a critical role in biogenesis of 30S subunits. The chain is Probable ribosomal RNA small subunit methyltransferase A from Methanospirillum hungatei JF-1 (strain ATCC 27890 / DSM 864 / NBRC 100397 / JF-1).